A 325-amino-acid polypeptide reads, in one-letter code: NADH-quinone oxidoreductase subunit H (325 aa).

8 helical membrane-spanning segments follow: residues 11–31 (ILIS…CGAF), 81–101 (AIFT…FAIV), 114–134 (IGIL…LFAG), 154–174 (LSYE…VGSF), 186–206 (VWNV…GVAV), 237–257 (FFVG…TLFF), 265–285 (LPPF…FILI), and 304–324 (VCLP…LYNA).

Belongs to the complex I subunit 1 family. NDH-1 is composed of 13 different subunits. Subunits NuoA, H, J, K, L, M, N constitute the membrane sector of the complex.

The protein localises to the cell inner membrane. It catalyses the reaction a quinone + NADH + 5 H(+)(in) = a quinol + NAD(+) + 4 H(+)(out). NDH-1 shuttles electrons from NADH, via FMN and iron-sulfur (Fe-S) centers, to quinones in the respiratory chain. The immediate electron acceptor for the enzyme in this species is believed to be ubiquinone. Couples the redox reaction to proton translocation (for every two electrons transferred, four hydrogen ions are translocated across the cytoplasmic membrane), and thus conserves the redox energy in a proton gradient. This subunit may bind ubiquinone. The protein is NADH-quinone oxidoreductase subunit H of Yersinia pseudotuberculosis serotype O:3 (strain YPIII).